We begin with the raw amino-acid sequence, 233 residues long: Small ribosomal subunit protein uS3 (233 aa).

The KH type-2 domain maps to 39 to 108; that stretch reads IRTALFKLLK…KLIVNVRVIE (70 aa).

This sequence belongs to the universal ribosomal protein uS3 family. Part of the 30S ribosomal subunit. Forms a tight complex with proteins S10 and S14.

Its function is as follows. Binds the lower part of the 30S subunit head. Binds mRNA in the 70S ribosome, positioning it for translation. This is Small ribosomal subunit protein uS3 from Mycoplasma mycoides subsp. mycoides SC (strain CCUG 32753 / NCTC 10114 / PG1).